Consider the following 309-residue polypeptide: Ribosomal RNA small subunit methyltransferase H (309 aa).

S-adenosyl-L-methionine-binding positions include glycine 33–histidine 35, aspartate 53, phenylalanine 79, aspartate 100, and glutamine 107.

It belongs to the methyltransferase superfamily. RsmH family.

The protein localises to the cytoplasm. The catalysed reaction is cytidine(1402) in 16S rRNA + S-adenosyl-L-methionine = N(4)-methylcytidine(1402) in 16S rRNA + S-adenosyl-L-homocysteine + H(+). Specifically methylates the N4 position of cytidine in position 1402 (C1402) of 16S rRNA. The polypeptide is Ribosomal RNA small subunit methyltransferase H (Clostridium botulinum (strain Kyoto / Type A2)).